We begin with the raw amino-acid sequence, 215 residues long: Ribonuclease T (215 aa).

The Exonuclease domain occupies 20–194 (VVIDVETAGF…YDTLQTAKLF (175 aa)). Positions 23, 25, 181, and 186 each coordinate Mg(2+). H181 acts as the Proton donor/acceptor in catalysis.

It belongs to the RNase T family. As to quaternary structure, homodimer. Requires Mg(2+) as cofactor.

In terms of biological role, trims short 3' overhangs of a variety of RNA species, leaving a one or two nucleotide 3' overhang. Responsible for the end-turnover of tRNA: specifically removes the terminal AMP residue from uncharged tRNA (tRNA-C-C-A). Also appears to be involved in tRNA biosynthesis. The sequence is that of Ribonuclease T from Yersinia pseudotuberculosis serotype I (strain IP32953).